The following is a 337-amino-acid chain: GTP 3',8-cyclase (337 aa).

One can recognise a Radical SAM core domain in the interval 17-243 (PFQRQYYYLR…HKSHTDGPAK (227 aa)). Arginine 26 contacts GTP. Residues cysteine 33 and cysteine 37 each coordinate [4Fe-4S] cluster. S-adenosyl-L-methionine is bound at residue tyrosine 39. Cysteine 40 contributes to the [4Fe-4S] cluster binding site. Arginine 76 lines the GTP pocket. Glycine 80 is a binding site for S-adenosyl-L-methionine. Threonine 107 lines the GTP pocket. Serine 131 is an S-adenosyl-L-methionine binding site. Position 168 (lysine 168) interacts with GTP. Methionine 202 provides a ligand contact to S-adenosyl-L-methionine. [4Fe-4S] cluster-binding residues include cysteine 265 and cysteine 268. 270 to 272 (RLR) lines the GTP pocket. [4Fe-4S] cluster is bound at residue cysteine 282.

Belongs to the radical SAM superfamily. MoaA family. Monomer and homodimer. [4Fe-4S] cluster serves as cofactor.

The catalysed reaction is GTP + AH2 + S-adenosyl-L-methionine = (8S)-3',8-cyclo-7,8-dihydroguanosine 5'-triphosphate + 5'-deoxyadenosine + L-methionine + A + H(+). Its pathway is cofactor biosynthesis; molybdopterin biosynthesis. Functionally, catalyzes the cyclization of GTP to (8S)-3',8-cyclo-7,8-dihydroguanosine 5'-triphosphate. This chain is GTP 3',8-cyclase, found in Haemophilus influenzae (strain PittGG).